The chain runs to 298 residues: Syntenin-1 (298 aa).

An N-acetylserine modification is found at serine 2. Residues serine 2–serine 60 form an interaction with PDCD6IP region. 3 short sequence motifs (LYPX(n)L motif) span residues leucine 3–leucine 7, leucine 45–leucine 49, and leucine 49–leucine 53. Serine 6 carries the post-translational modification Phosphoserine. Position 46 is a phosphotyrosine (tyrosine 46). PDZ domains are found at residues glutamate 114–arginine 193 and threonine 198–phenylalanine 273. A 1,2-diacyl-sn-glycero-3-phospho-(1D-myo-inositol-4,5-bisphosphate)-binding positions include asparagine 215 and lysine 250–aspartate 251.

Monomer and homodimer. Interacts with SDC1, SDC2, SDC3, SDC4, NRXN2, EPHA7, EPHB1, NF2 isoform 1, TGFA and IL5RA. Interacts with NFASC and PTPRJ. Interacts with SDCBP2. Interacts with PDCD6IP. Forms a complex with PDCD6IP and SDC2. Interacts (via C-terminus) with TGFBR1. Binds to FZD7; this interaction is increased by inositol trisphosphate (IP3). Interacts with SMO. Post-translationally, phosphorylated on tyrosine residues. In terms of tissue distribution, expressed in lung cancers, including adenocarcinoma, squamous cell carcinoma and small-cell carcinoma (at protein level). Widely expressed. Expressed in fetal kidney, liver, lung and brain. In adult highest expression in heart and placenta.

The protein localises to the cell junction. It is found in the focal adhesion. The protein resides in the adherens junction. Its subcellular location is the cell membrane. It localises to the endoplasmic reticulum membrane. The protein localises to the nucleus. It is found in the melanosome. The protein resides in the cytoplasm. Its subcellular location is the cytosol. It localises to the cytoskeleton. The protein localises to the secreted. It is found in the extracellular exosome. The protein resides in the membrane raft. Its function is as follows. Multifunctional adapter protein involved in diverse array of functions including trafficking of transmembrane proteins, neuro and immunomodulation, exosome biogenesis, and tumorigenesis. Positively regulates TGFB1-mediated SMAD2/3 activation and TGFB1-induced epithelial-to-mesenchymal transition (EMT) and cell migration in various cell types. May increase TGFB1 signaling by enhancing cell-surface expression of TGFR1 by preventing the interaction between TGFR1 and CAV1 and subsequent CAV1-dependent internalization and degradation of TGFR1. In concert with SDC1/4 and PDCD6IP, regulates exosome biogenesis. Regulates migration, growth, proliferation, and cell cycle progression in a variety of cancer types. In adherens junctions may function to couple syndecans to cytoskeletal proteins or signaling components. Seems to couple transcription factor SOX4 to the IL-5 receptor (IL5RA). May also play a role in vesicular trafficking. Seems to be required for the targeting of TGFA to the cell surface in the early secretory pathway. In Homo sapiens (Human), this protein is Syntenin-1 (SDCBP).